A 528-amino-acid chain; its full sequence is Poly(A) RNA polymerase GLD2 (528 aa).

2 disordered regions span residues Met-1–Gln-41 and Arg-99–Ser-121. Composition is skewed to low complexity over residues Pro-16 to Leu-32 and Ser-102 to Ser-113. Residues Asp-259 and Asp-261 each coordinate Mg(2+). The region spanning Leu-428–Asn-481 is the PAP-associated domain.

Belongs to the DNA polymerase type-B-like family. GLD2 subfamily. In terms of assembly, component of a complex at least composed of cpeb1, cpsf1, tent2/gld2, pabpc1/ePAB, parn and sympk. Following oocyte maturation, parn is expelled from the complex. Interacts with rbm9 and sympk. It depends on Mg(2+) as a cofactor. Mn(2+) is required as a cofactor.

The protein localises to the cytoplasm. The enzyme catalyses RNA(n) + ATP = RNA(n)-3'-adenine ribonucleotide + diphosphate. In terms of biological role, cytoplasmic poly(A) RNA polymerase that adds successive AMP monomers to the 3'-end of specific RNAs, forming a poly(A) tail. In contrast to the canonical nuclear poly(A) RNA polymerase, it only adds poly(A) to selected cytoplasmic mRNAs during oocyte maturation. Plays a central role during oocyte maturation by mediating polyadenylation of dormant mRNAs, which contain 5'AAUAAA-3' sequence in their 3'-UTR. In immature oocytes, polyadenylation of poly(A) tails is counteracted by the ribonuclease parn. During maturation parn is excluded from the ribonucleoprotein complex, allowing poly(A) elongation and activation of mRNAs. May not play a role in replication-dependent histone mRNA degradation. The chain is Poly(A) RNA polymerase GLD2 (tent2) from Xenopus tropicalis (Western clawed frog).